Reading from the N-terminus, the 371-residue chain is MKASWRQVFAWRMQRQFLEPRTQPSASDVVGRLCGVQAQVWSVAELNVALRQAAPDRESVNREVADLSLMKTWAMRGTLHLLRPSEAGPYLSLMANTGSWLKPSWTRASGVTPRQVDELTEEVAGILDGVVLTRDELVTRLVADKRFVSMEERLRSGWGSVLKPLAWRGVLCHGPNRGNKITFTLPASQFGADWGKMPEPDEAAPTVIKAYLGAYGPATIETFDRWLSLNSTSKPKLRKWFGDMGDELTEVDVEGRKAFVLTEHAEELAATAPCTGIRLLGGFDQYLLGPGTKDEVVLAPEHRSAVSRAAGWISPVVVKDGRVVGVWEIVDQELVVTPFPDTERLPVKAVEKEAAHVARASGVSRLPVRIV.

Residues 37–39 (QAQ) carry the QXQ; important for activity motif.

This sequence belongs to the DNA glycosylase AlkZ-like family.

Functionally, DNA glycosylase involved in the repair of interstrand DNA cross-links (ICLs), which are highly toxic DNA lesions that covalently tether the opposing strands of DNA, thereby inhibiting essential cellular processes such as DNA replication and transcription. Acts by unhooking both sides of the ICLs, forming abasic (AP) sites on both strands. AlkZ specifically repairs DNA damage induced by azinomycin B (AZB), a natural product with potent antibiotic and antitumor activities that interacts covalently with duplex DNA and forms ICLs. AlkZ thus confers self-resistance to azinomycin B, which is produced by S.sahachiroi. It may also protect target sites by protein-DNA interaction. Binds sequence non-specifically to native DNA and structure-specifically to azinomycin B-modified sites, with higher affinity to azinomycin B-modified sites and lower affinity to native DNA duplex. In vitro, also acts on monoadducts and can catalyze the excision of N7-methylguanine (7mGua) from an oligonucleotide containing N7-methyldeoxyguanosine (d7mG). Is a monofunctional DNA glycosylase that does not have lyase activity. This Streptomyces sahachiroi protein is Interstrand DNA cross-link repair glycosylase.